The primary structure comprises 401 residues: O-antigen ligase (401 aa).

Topologically, residues 1-20 (MFAATRLSRLRHDTSRILSH) are cytoplasmic. The helical transmembrane segment at 21 to 37 (WILPLGWLALLTGMFWV) threads the bilayer. Residues 38–42 (GDRSD) are Periplasmic-facing. Residues 43–61 (YHRLFYILLAAPTLLYVIL) form a helical membrane-spanning segment. Residues 62 to 72 (QPRLLRPLTGS) lie on the Cytoplasmic side of the membrane. The helical transmembrane segment at 73-92 (PLFIAFLAFSSYMMLSLSWS) threads the bilayer. Residues 93-103 (TPENSTGSLLK) lie on the Periplasmic side of the membrane. A helical membrane pass occupies residues 104-122 (RPLYIALLFFCAAILALEA). Over 123–129 (PLRLKTA) the chain is Cytoplasmic. The chain crosses the membrane as a helical span at residues 130–150 (TWLAALGAVISAAATLLRYYW). Over 151–161 (DANPLRLTGYG) the chain is Periplasmic. A helical membrane pass occupies residues 162–183 (ALYNPLLSAHVYGAFTALWLAY). The Cytoplasmic segment spans residues 184–189 (WMQSRP). A helical transmembrane segment spans residues 190-208 (ILAPLPLISLALLGGLLIA). The Periplasmic segment spans residues 209 to 212 (TGSR). A helical transmembrane segment spans residues 213–229 (TPLVGLTAALMWLVLAG). Topologically, residues 230–234 (DRKKA) are cytoplasmic. A helical transmembrane segment spans residues 235-252 (LIALALALAGALLGYILY). Topologically, residues 253 to 306 (PEVITQRGASFRPEIWADALRQISEHPWLGHGYDHPMRIVLSNGMLLADPHNIE) are periplasmic. The WZY-C stretch occupies residues 258 to 319 (QRGASFRPEI…LFAGGIIGLL (62 aa)). A helical membrane pass occupies residues 307–331 (LGVLFAGGIIGLLLWVAIYALAFGF). Residues 332 to 339 (SWKNRKSP) are Cytoplasmic-facing. A helical membrane pass occupies residues 340–357 (AVLLASTWLVFGLAAGLT). Residues 358-368 (EGNAFLPRPKE) are Periplasmic-facing. The chain crosses the membrane as a helical span at residues 369-385 (HWFLIWIPMALLYALWI). At 386–401 (QQRFAASRRGEDIAAP) the chain is on the cytoplasmic side.

This sequence belongs to the O-antigen ligase family. In terms of assembly, homodimer.

The protein localises to the cell inner membrane. The enzyme catalyses a lipid-linked O antigen + a lipid A-core oligosaccharide = a lipopolysaccharide + a polyisoprenyl diphosphate.. It functions in the pathway bacterial outer membrane biogenesis; lipopolysaccharide biosynthesis. With respect to regulation, activity does not require ATP and magnesium ions. Transferase involved in the biosynthesis of the lipopolysaccharide (LPS). Catalyzes the transfer of a polymerized O-antigen molecule from its polyprenyl diphosphate membrane anchor to a terminal sugar of the lipid A-core oligosaccharide, finalizing the biosynthesis of the lipopolysaccharide. Required for the attachment of both A-band and B-band O-antigens, two forms of O-antigen produced by P.aeruginosa, onto the lipid A-core receptors. Important for cell wall integrity and motility of the bacteria. In Pseudomonas aeruginosa (strain ATCC 15692 / DSM 22644 / CIP 104116 / JCM 14847 / LMG 12228 / 1C / PRS 101 / PAO1), this protein is O-antigen ligase.